A 291-amino-acid polypeptide reads, in one-letter code: 33 kDa chaperonin (291 aa).

2 cysteine pairs are disulfide-bonded: C235–C237 and C268–C271.

This sequence belongs to the HSP33 family. Post-translationally, under oxidizing conditions two disulfide bonds are formed involving the reactive cysteines. Under reducing conditions zinc is bound to the reactive cysteines and the protein is inactive.

The protein resides in the cytoplasm. Its function is as follows. Redox regulated molecular chaperone. Protects both thermally unfolding and oxidatively damaged proteins from irreversible aggregation. Plays an important role in the bacterial defense system toward oxidative stress. The sequence is that of 33 kDa chaperonin from Bacillus velezensis (strain DSM 23117 / BGSC 10A6 / LMG 26770 / FZB42) (Bacillus amyloliquefaciens subsp. plantarum).